Consider the following 375-residue polypeptide: Phosphoribulokinase, chloroplastic (375 aa).

Residues 1-31 constitute a chloroplast transit peptide; the sequence is MAFTMRAPAPRATAQSRVTANRARRSLVVRA. The cysteines at positions 47 and 86 are disulfide-linked.

This sequence belongs to the phosphoribulokinase family. Component of a complex that contains two dimers of PRK, two tetramers of GAPDH and CP12.

Its subcellular location is the plastid. It is found in the chloroplast. The enzyme catalyses D-ribulose 5-phosphate + ATP = D-ribulose 1,5-bisphosphate + ADP + H(+). It functions in the pathway carbohydrate biosynthesis; Calvin cycle. Its activity is regulated as follows. Light regulated via thioredoxin by reversible oxidation/reduction of sulfhydryl/disulfide groups. This chain is Phosphoribulokinase, chloroplastic (PRKA), found in Chlamydomonas reinhardtii (Chlamydomonas smithii).